The chain runs to 137 residues: Large ribosomal subunit protein uL16 (137 aa).

Belongs to the universal ribosomal protein uL16 family. In terms of assembly, part of the 50S ribosomal subunit.

Functionally, binds 23S rRNA and is also seen to make contacts with the A and possibly P site tRNAs. The polypeptide is Large ribosomal subunit protein uL16 (Azorhizobium caulinodans (strain ATCC 43989 / DSM 5975 / JCM 20966 / LMG 6465 / NBRC 14845 / NCIMB 13405 / ORS 571)).